The sequence spans 401 residues: Probable inactive purple acid phosphatase 14 (401 aa).

Residues 1–30 form the signal peptide; that stretch reads MEETRRRFVISSVLSVSLIYLCLSTCHVSA. Asn-79 is a glycosylation site (N-linked (GlcNAc...) asparagine). A substrate-binding site is contributed by Asn-197. Residue Asn-197 coordinates Zn(2+). Asn-246 is a glycosylation site (N-linked (GlcNAc...) asparagine). Residue His-256 participates in Zn(2+) binding. N-linked (GlcNAc...) asparagine glycosylation occurs at Asn-266. His-305 contributes to the Zn(2+) binding site. 305–307 provides a ligand contact to substrate; it reads HDH. His-307 contributes to the Fe cation binding site. Residues Asn-371 and Asn-384 are each glycosylated (N-linked (GlcNAc...) asparagine).

Belongs to the metallophosphoesterase superfamily. Purple acid phosphatase family. In terms of assembly, homodimer. It depends on Fe cation as a cofactor. Zn(2+) serves as cofactor. As to expression, specifically expressed in flowers.

It is found in the secreted. This chain is Probable inactive purple acid phosphatase 14 (PAP14), found in Arabidopsis thaliana (Mouse-ear cress).